The chain runs to 155 residues: Probable tellurium resistance transcriptional regulator TerW (155 aa).

Involved in tellurite resistance. TerW binds specifically to the potential promoter region of the terZABCDE operon and probably regulates expression of the genes. This Escherichia coli protein is Probable tellurium resistance transcriptional regulator TerW.